A 414-amino-acid chain; its full sequence is Probable sugar phosphate/phosphate translocator At1g06470 (414 aa).

9 helical membrane-spanning segments follow: residues 72–92 (VLKT…LTLY), 101–121 (LGKF…QAVL), 172–192 (TFAT…AFAF), 197–217 (PSLK…LTVA), 224–244 (FWGF…WCMT), 259–279 (FIFM…LSLL), 303–323 (FLML…YVLV), 328–348 (AVTV…VAVF), and 354–374 (FTWL…LFNW). The EamA domain occupies 106 to 216 (APLLMNTIHF…VISAGVLLTV (111 aa)).

It belongs to the TPT transporter family. TPT (TC 2.A.7.9) subfamily.

Its subcellular location is the membrane. The chain is Probable sugar phosphate/phosphate translocator At1g06470 from Arabidopsis thaliana (Mouse-ear cress).